The sequence spans 228 residues: PKHD-type hydroxylase xcc-b100_1388 (228 aa).

The Fe2OG dioxygenase domain maps to 78-180; that stretch reads RIYPPLFNRY…RVASFFWIQS (103 aa). 3 residues coordinate Fe cation: His-96, Asp-98, and His-161. Position 171 (Arg-171) interacts with 2-oxoglutarate.

It depends on Fe(2+) as a cofactor. L-ascorbate serves as cofactor.

The polypeptide is PKHD-type hydroxylase xcc-b100_1388 (Xanthomonas campestris pv. campestris (strain B100)).